The sequence spans 1492 residues: Condensin-2 complex subunit D3-L (1492 aa).

The disordered stretch occupies residues 152 to 201 (WPRDPNASRKRKKDTLKSSQGDNRGGRKRPRPPRRDEQEMEDLSEEEQDE). Residues 189-201 (QEMEDLSEEEQDE) are compositionally biased toward acidic residues. HEAT repeat units lie at residues 543–581 (SSDGKEVLTMLRYRAGDEKTNVRKSALQVLVNVLKCHLI), 583–619 (CSSEDLSTLQDRCRDPAVSVRKQALTSLTELLLAQPH), and 621–659 (VLIQKAWLTGLIPVVLDTESSVQEKALECLDQLLLQSIT). Disordered regions lie at residues 1269–1345 (QLER…PRPR), 1359–1406 (RKAA…SLVG), and 1454–1492 (IMSPDKPAPQPRKWNVESPVQRRSIRQRISGKAPLKPSN). The segment covering 1277-1290 (NVQNPPSAESTGSP) has biased composition (polar residues). Positions 1377 to 1388 (PSTPSPARTTSS) are enriched in low complexity.

As to quaternary structure, component of the condensin-2 complex, which contains the smc2 and smc4 heterodimer, and three non SMC subunits, ncapg2, ncaph2 and ncapd3 that probably regulate the complex.

It is found in the nucleus. Regulatory subunit of the condensin-2 complex, a complex which establishes mitotic chromosome architecture and is involved in physical rigidity of the chromatid axis. This chain is Condensin-2 complex subunit D3-L, found in Xenopus laevis (African clawed frog).